The chain runs to 308 residues: Cilia- and flagella-associated protein 73 (308 aa).

Coiled-coil stretches lie at residues R34–C143 and A175–K233.

Belongs to the CFAP73 family.

It is found in the cytoplasm. Its subcellular location is the cytoskeleton. The protein resides in the cilium axoneme. In terms of biological role, may play a role in ciliary/flagellar motility by regulating the assembly and the activity of axonemal inner dynein arm. The polypeptide is Cilia- and flagella-associated protein 73 (Homo sapiens (Human)).